A 230-amino-acid chain; its full sequence is uncharacterized protein (230 aa).

The signal sequence occupies residues methionine 1–arginine 16. Helical transmembrane passes span valine 27–isoleucine 47, leucine 118–phenylalanine 138, phenylalanine 150–leucine 170, and serine 172–phenylalanine 191.

It is found in the cytoplasm. The protein localises to the nucleus membrane. This is an uncharacterized protein from Schizosaccharomyces pombe (strain 972 / ATCC 24843) (Fission yeast).